Reading from the N-terminus, the 544-residue chain is Methionine--tRNA ligase 1 (544 aa).

The short motif at 10-20 is the 'HIGH' region element; sequence PYANGSLHLGH. Residues Cys-141, Cys-144, Cys-153, and Cys-156 each coordinate Zn(2+). Residues 329 to 333 carry the 'KMSKS' region motif; that stretch reads KLSTS. Residue Thr-332 coordinates ATP.

Belongs to the class-I aminoacyl-tRNA synthetase family. MetG type 1 subfamily. In terms of assembly, monomer. Zn(2+) serves as cofactor.

The protein localises to the cytoplasm. The enzyme catalyses tRNA(Met) + L-methionine + ATP = L-methionyl-tRNA(Met) + AMP + diphosphate. Is required not only for elongation of protein synthesis but also for the initiation of all mRNA translation through initiator tRNA(fMet) aminoacylation. The polypeptide is Methionine--tRNA ligase 1 (Bacillus cereus (strain ATCC 10987 / NRS 248)).